Consider the following 1824-residue polypeptide: MSLRGPMKHSHLRQVSAASLETLSTTRSLALSQTDGQSDKPSTPDERTIRLSSTGLDRRQCSLWVHDETFSKEEILFNQAAFTDMGVEVGDVIEILPARYPGDGTHSAKTDFGSRSLRDSHVESSSTLHSDSMSKFKTPLQSRCLFVVKPLPQDIKTRNPKLELSVTTSIANIFGFKNRTTVHISIVDRAQCAASHVDISFRDQYMVRSDMWRLVMSELAERIVYKGQKIVFTGSIKATVKNIFIRGKKVLSGFFSPQTIPVFRSESAKYVLFIQMSREMWDFDSEGTGDILFSRVINGFLPELFKRWVNSDARHLVTIVLFTRVEYDASAIASSTFSSENLTSMFGPNHVPTRDFYRVVVNDMASGHWTTILDELKKDFRTFLRDVSILNVHNADTPTFNATGASKSQPATIAGRPSTALRGNILEAIHLASSHLAFDHIDRDMVHTGTSIIVITPGSGVFEVSYESLASTTEALTNRGIAIDLVCLSPMPLHSVPLFKYREPAHRPTTAAFGDIQHGGYSPEMRHSFASISSKTPHLSPKSALLDSFTGMSSKSQWSGRSNEWNYGIPHWLDISYWNPETYRESRRILKKDPNAPIPFTVTKQSKVFVPRVRMYEIQMMGVMESEQSNISIPYLSEGPNISRATSSTLGSSPGSLVPPKATFRRNSPFRHQLSDSLRPEPFLHNMASSKDAMLTIPKKTPKTVLSWMDNYDENVFQPFRKRRHRRKPSKIKRPSEPEVKASNAHERISARSISRLRENESTRSASRQIDIPLPAPKSPVSTKSASPKKPALKSSSKTKLPRISRTISFALRGLSSTPPRAQASTEVNVEHARGLPTSNSRKLSGVLADNRSVDSLSASDSASTVIDLAPSPETPQKPIKNTAITPSRPISIKVPPKQPLQDTEQQGRPAIPESVSTTTTEIALGDDTRLTAQPRRHGPKFEVNLSSGSRNGSSKSPQSKALAPWVRSVNPCNTPREVLRDTSWFGRWQHAYPRPPHVAVVKWKSLKSPAVLPLTTEEFPTPSELASDYLQTPYRVFPNEDSEGIEAPKTRGVLLREMISLRLSHGFQIVVGKNVVEASAQYTLQSPNVFDTHALERAGATVFLSKGNSIHRLICVEGAEIEVTRYTHRTSSLLASDQKRKFTLYSPAMRTILSPEYVVKDIKLDSTYEEYNWNYADNYVAGHRDYLFNPAQQLHFWRVRYVLIPMRLHFKSRRLHGFNEDNEEEIHLLGINQLTHIWQRHKYIPPEEKRFESSNKKRDQNPLNIMYQTRNPSEVIAAELDRIILVDPGLDSSPAQLLPESELLERSGISLSSLAQIIQGEKGVRMMDRRWHWRLHYNCFIGFELTTWLLQNFRDIDSREEAVEFGNELMKHGLFQHVEKRHNFRDGNYFYQISSEYRVSRPESRGSWFPQIRPDKSVPSTPVGEASKGSPISGHTRSDSTEDTQSQTPSTPSKLKNKASITLSKTMKYDVDPRKRSNRPEVIDLHYDRLHNPENCFHIELSWMNTTPKLIEDTVLSWASTAEKFGLKLVQVPIAEACAIDKTQPFRKPYCVQLKAPPPKGPIPLQCNSESFSQPVTLDHQYFHKALLRKFDFVLDFEARSSYPADVEVSYSWGMPDYQYPQYIHRSGSVLAQITGEGDFLLLANRLVSTRSAASRDMPRHERLDRPDQYRARAGTYDPVDRISPRLSPMARPVHEVHSPLSPQGHASIDSANLYRAPEHILTGFADFCNDPARLEQFYSEAQVRATSTKVGPAPTTLTDASIPSLELPASVVSHHISPPPGLPSRSSHNIAAPLSEIRRSRDDSNMSRGSPRSGSLRPLSLT.

The segment covering 28 to 41 (SLALSQTDGQSDKP) has biased composition (polar residues). Disordered stretches follow at residues 28–48 (SLAL…DERT), 644–682 (RATS…RPEP), and 719–964 (PFRK…KALA). Low complexity predominate over residues 646 to 659 (TSSTLGSSPGSLVP). A compositionally biased stretch (basic residues) spans 720–733 (FRKRRHRRKPSKIK). Over residues 734-762 (RPSEPEVKASNAHERISARSISRLRENES) the composition is skewed to basic and acidic residues. Over residues 779–799 (SPVSTKSASPKKPALKSSSKT) the composition is skewed to low complexity. The span at 815-828 (LSSTPPRAQASTEV) shows a compositional bias: polar residues. Composition is skewed to low complexity over residues 854–864 (VDSLSASDSAS) and 947–961 (SSGS…PQSK). In terms of domain architecture, DEP spans 1321-1396 (GEKGVRMMDR…DGNYFYQISS (76 aa)). Disordered regions lie at residues 1406 to 1460 (RGSW…KNKA) and 1797 to 1824 (SEIR…LSLT). The segment covering 1444–1460 (DTQSQTPSTPSKLKNKA) has biased composition (polar residues). A compositionally biased stretch (basic and acidic residues) spans 1798–1807 (EIRRSRDDSN). Low complexity predominate over residues 1809 to 1824 (SRGSPRSGSLRPLSLT).

The protein belongs to the IML1 family.

The protein localises to the vacuole membrane. The chain is Vacuolar membrane-associated protein iml1 (iml1) from Aspergillus oryzae (strain ATCC 42149 / RIB 40) (Yellow koji mold).